The chain runs to 230 residues: Respiratory supercomplex factor 1, mitochondrial (230 aa).

Pro residues predominate over residues 1 to 12; the sequence is MADGPPSIPGPL. The tract at residues 1–20 is disordered; that stretch reads MADGPPSIPGPLPSSFDSDQ. The HIG1 domain occupies 12-103; that stretch reads LPSSFDSDQD…KDREKSKELR (92 aa). The next 2 helical transmembrane spans lie at 40-59 and 71-93; these read LIPL…YRAL and FRAR…MYYQ. Residues 93–156 adopt a coiled-coil conformation; sequence QKDREKSKEL…RAEEAEAAAA (64 aa). A disordered region spans residues 153–230; that stretch reads AAAAAAATTE…GEIISSQKKD (78 aa). Basic and acidic residues predominate over residues 185–196; that stretch reads GEKKEEEKKVAE.

It belongs to the RCF1 family. In terms of assembly, associates with the respiratory chain complex III/complex IV supercomplex.

The protein resides in the mitochondrion membrane. Functionally, cytochrome c oxidase subunit which plays a role in assembly of respiratory supercomplexes. This is Respiratory supercomplex factor 1, mitochondrial (RCF1) from Fusarium vanettenii (strain ATCC MYA-4622 / CBS 123669 / FGSC 9596 / NRRL 45880 / 77-13-4) (Fusarium solani subsp. pisi).